The primary structure comprises 667 residues: Chaperone protein DnaK (667 aa).

The residue at position 196 (Thr-196) is a Phosphothreonine; by autocatalysis. 2 disordered regions span residues 495-525 (EANS…RKER) and 595-667 (AGEE…GDDE). Residues 506-525 (EKMKEEAEQHAEEDERRKER) show a composition bias toward basic and acidic residues. The segment covering 595–612 (AGEEIREAQQQQAQQGAA) has biased composition (low complexity). Residues 630–641 (GPAGGPTGGPAS) show a composition bias toward gly residues. Positions 647 to 667 (DSDEEDVQDADYEVVDEGDDE) are enriched in acidic residues.

It belongs to the heat shock protein 70 family.

Acts as a chaperone. The polypeptide is Chaperone protein DnaK (Salinibacter ruber (strain DSM 13855 / M31)).